The chain runs to 867 residues: Nuclear body protein SP140 (867 aa).

The 117-residue stretch at 22 to 138 (VAEIQNVEGQ…IYRSFQNVCY (117 aa)) folds into the HSR domain. Disordered stretches follow at residues 260-341 (TYST…EEPQ), 365-432 (TPQV…SEEL), and 486-580 (IANN…KHKD). The span at 268 to 301 (KQGEEEGRNSPRKRNQDKEKYQESPEGRDKETFD) shows a compositional bias: basic and acidic residues. 2 stretches are compositionally biased toward acidic residues: residues 323-341 (EGEEGSDDCSEMCDGEEPQ) and 384-397 (EGEEGSDDCSEMCD). Low complexity predominate over residues 404–416 (ASSSLARRGSVSS). Composition is skewed to basic residues over residues 494-512 (KPKRKRRKKRGHGWSRMRM) and 567-577 (QKRVRSRASRK). A Nuclear localization signal motif is present at residues 495-514 (PKRKRRKKRGHGWSRMRMRR). In terms of domain architecture, SAND spans 580–661 (DETVDFKAPL…RWLMENGFLP (82 aa)). The segment at 690-736 (LDECEVCRDGGELFCCDTCSRVFHEDCHIPPVEAERTPWNCIFCRMK) adopts a PHD-type zinc-finger fold. A Phosphothreonine modification is found at Thr726. The Bromo domain maps to 754-857 (QMCPEEQLKC…AEFEKNFKEV (104 aa)).

In terms of assembly, interacts with PIN1. Post-translationally, phosphorylation at Thr-726 promotes binding of PIN1 and subsequent isomerization of Pro-727. As to expression, high levels in spleen and peripheral blood leukocytes, much lower levels in tonsils, thymus, prostate, ovary, small intestine, and colon. Very low levels in heart, brain, placenta, lung, liver, skeletal muscle, kidney, and pancreas. Not detected in brain, liver and muscle.

The protein localises to the nucleus. It localises to the PML body. The protein resides in the cytoplasm. Functionally, component of the nuclear body, also known as nuclear domain 10, PML oncogenic domain, and KR body. May be involved in the pathogenesis of acute promyelocytic leukemia and viral infection. May play a role in chromatin-mediated regulation of gene expression although it does not bind to histone H3 tails. This chain is Nuclear body protein SP140, found in Homo sapiens (Human).